A 153-amino-acid polypeptide reads, in one-letter code: Aspartate carbamoyltransferase regulatory chain (153 aa).

Zn(2+) is bound by residues Cys-109, Cys-114, Cys-135, and Cys-138.

It belongs to the PyrI family. In terms of assembly, contains catalytic and regulatory chains. Zn(2+) is required as a cofactor.

Functionally, involved in allosteric regulation of aspartate carbamoyltransferase. The sequence is that of Aspartate carbamoyltransferase regulatory chain from Natronomonas pharaonis (strain ATCC 35678 / DSM 2160 / CIP 103997 / JCM 8858 / NBRC 14720 / NCIMB 2260 / Gabara) (Halobacterium pharaonis).